The chain runs to 336 residues: CASP-like protein UU1 (336 aa).

Over 1-170 (MGKGPGLDPS…PAMESNKDDN (170 aa)) the chain is Cytoplasmic. A helical membrane pass occupies residues 171–191 (FFGAIVLSLRAAQIVFTVVGL). Over 192 to 222 (GVMGSLKHTSHGDYYYYYYDFSFTQVDSYIG) the chain is Extracellular. A helical transmembrane segment spans residues 223-243 (VLSLDVIVCLYAIVQLVLCFI). Residues 244–261 (QRSNQGKYLSSPTTVAAK) lie on the Cytoplasmic side of the membrane. A helical membrane pass occupies residues 262–282 (LTFVFDQVLAYALVATAGAAA). Residues 283–307 (GSALEIRKGTSCSGTWTVICSKGEA) lie on the Extracellular side of the membrane. Residues 308–328 (SVAMSFFAFAFLAATAAVYSV) traverse the membrane as a helical segment. The Cytoplasmic portion of the chain corresponds to 329 to 336 (RLLRITGR).

It belongs to the Casparian strip membrane proteins (CASP) family. In terms of assembly, homodimer and heterodimers.

It is found in the cell membrane. The protein is CASP-like protein UU1 of Physcomitrium patens (Spreading-leaved earth moss).